Here is a 364-residue protein sequence, read N- to C-terminus: MEHNGSASNADKIHQNRLSSVTEDEDQDAALTIVTVLDKVASIVDSVQASQKRIEERHREMENAIKSVQIDLLKLSQSHSNTGHIINKLFEKTRKVSAHIKDVKARVEKQQIHVKKVEVKQEEIMKKNKFRVVIFQEKFRCPTSLSVVKDRNLTENQEEDDDDIFDPPVDLSSDEEYYVEESRSARLRKSGKEHIDNIKKAFSKENMQKTRQNLDKKVNRIRTRIVTPERRERLRQSGERLRQSGERLRQSGERFKKSISNAAPSKEAFKMRSLRKGKDRTVAEGEECAREMGVDIIARSESLGPISELYSDELSEPEHEAARPVYPPHEGREIPTPEPLKVTFKSQVKVEDDESLLLDLKHSS.

The disordered stretch occupies residues 1-24 (MEHNGSASNADKIHQNRLSSVTED). Positions 44 to 77 (VDSVQASQKRIEERHREMENAIKSVQIDLLKLSQ) form a coiled coil. Ser-172 and Ser-173 each carry phosphoserine. Residues 202–226 (FSKENMQKTRQNLDKKVNRIRTRIV) adopt a coiled-coil conformation. Basic and acidic residues predominate over residues 231–256 (RERLRQSGERLRQSGERLRQSGERFK). Disordered stretches follow at residues 231 to 283 (RERL…RTVA) and 311 to 339 (SDELSEPEHEAARPVYPPHEGREIPTPEP). Tyr-326 carries the post-translational modification Phosphotyrosine. Thr-336 carries the phosphothreonine modification. The residue at position 355 (Ser-355) is a Phosphoserine.

The protein belongs to the CAVIN family. As to quaternary structure, component of the CAVIN complex composed of CAVIN1, CAVIN2, CAVIN3 and CAVIN4. Interacts with CAVIN1, ADRA1A and ADRA1B. Interacts with CAVIN2; this augments the transactivation of NPPA. Interacts with CAV3. Interacts with MAPK1 and MAPK3.

It localises to the cytoplasm. Its subcellular location is the myofibril. The protein resides in the sarcomere. The protein localises to the cytosol. It is found in the cell membrane. It localises to the sarcolemma. Its subcellular location is the membrane. The protein resides in the caveola. Functionally, modulates the morphology of formed caveolae in cardiomyocytes, but is not required for caveolar formation. Facilitates the recruitment of MAPK1/3 to caveolae within cardiomyocytes and regulates alpha-1 adrenergic receptor-induced hypertrophic responses in cardiomyocytes through MAPK1/3 activation. Contributes to proper membrane localization and stabilization of caveolin-3 (CAV3) in cardiomyocytes. Induces RHOA activation and activates NPPA transcription and myofibrillar organization through the Rho/ROCK signaling pathway. In Homo sapiens (Human), this protein is Caveolae-associated protein 4.